Consider the following 104-residue polypeptide: uncharacterized protein (104 aa).

Residues 77–98 (IAAVRANIIICACFFYLFCYCS) traverse the membrane as a helical segment.

It is found in the membrane. This is an uncharacterized protein from Saccharomyces cerevisiae (strain ATCC 204508 / S288c) (Baker's yeast).